Here is a 106-residue protein sequence, read N- to C-terminus: Small ribosomal subunit protein bS18 (106 aa).

The span at methionine 1–glutamine 22 shows a compositional bias: basic and acidic residues. Residues methionine 1–phenylalanine 34 form a disordered region.

Belongs to the bacterial ribosomal protein bS18 family. Part of the 30S ribosomal subunit. Forms a tight heterodimer with protein bS6.

Binds as a heterodimer with protein bS6 to the central domain of the 16S rRNA, where it helps stabilize the platform of the 30S subunit. The chain is Small ribosomal subunit protein bS18 from Geobacter metallireducens (strain ATCC 53774 / DSM 7210 / GS-15).